The chain runs to 228 residues: Sec-independent protein translocase protein TatB (228 aa).

Residues 1–21 traverse the membrane as a helical segment; it reads MFDFGLGELVFVGIIALIVLG. Disordered stretches follow at residues 126–162 and 196–228; these read LSDG…AETD and VPHT…VRKS. Over residues 206–228 the composition is skewed to basic residues; that stretch reads AISRKRGLRPKHRAKPKLRVRKS.

It belongs to the TatB family. As to quaternary structure, the Tat system comprises two distinct complexes: a TatABC complex, containing multiple copies of TatA, TatB and TatC subunits, and a separate TatA complex, containing only TatA subunits. Substrates initially bind to the TatABC complex, which probably triggers association of the separate TatA complex to form the active translocon.

Its subcellular location is the cell inner membrane. Its function is as follows. Part of the twin-arginine translocation (Tat) system that transports large folded proteins containing a characteristic twin-arginine motif in their signal peptide across membranes. Together with TatC, TatB is part of a receptor directly interacting with Tat signal peptides. TatB may form an oligomeric binding site that transiently accommodates folded Tat precursor proteins before their translocation. In Neisseria meningitidis serogroup C / serotype 2a (strain ATCC 700532 / DSM 15464 / FAM18), this protein is Sec-independent protein translocase protein TatB.